A 31-amino-acid chain; its full sequence is Photosystem II reaction center protein T (31 aa).

The chain crosses the membrane as a helical span at residues 3–23; sequence ALVYTFLLISTLGIIFFGIFF.

This sequence belongs to the PsbT family. PSII is composed of 1 copy each of membrane proteins PsbA, PsbB, PsbC, PsbD, PsbE, PsbF, PsbH, PsbI, PsbJ, PsbK, PsbL, PsbM, PsbT, PsbY, PsbZ, Psb30/Ycf12, at least 3 peripheral proteins of the oxygen-evolving complex and a large number of cofactors. It forms dimeric complexes.

It localises to the plastid. The protein resides in the chloroplast thylakoid membrane. Found at the monomer-monomer interface of the photosystem II (PS II) dimer, plays a role in assembly and dimerization of PSII. PSII is a light-driven water plastoquinone oxidoreductase, using light energy to abstract electrons from H(2)O, generating a proton gradient subsequently used for ATP formation. This is Photosystem II reaction center protein T from Nephroselmis olivacea (Green alga).